A 609-amino-acid chain; its full sequence is Autophagy-related protein 22-1 (609 aa).

Transmembrane regions (helical) follow at residues 35–55 (YGWA…PITL), 117–137 (TASF…ILII), 151–171 (LLLM…LGVV), and 176–196 (MVGA…FVLL). Basic and acidic residues predominate over residues 214 to 231 (AREPRPALDDSRAQEGHS). The disordered stretch occupies residues 214-240 (AREPRPALDDSRAQEGHSDTTNGIEHG). A glycan (N-linked (GlcNAc...) asparagine) is linked at Asn-244. The chain crosses the membrane as a helical span at residues 287–307 (IGIGYIGAIILQIVCILVVIA). Asn-309 is a glycosylation site (N-linked (GlcNAc...) asparagine). A run of 3 helical transmembrane segments spans residues 317-337 (LVLF…ALWL), 381-401 (ILLF…VSGT), and 415-435 (AALG…AFSW). N-linked (GlcNAc...) asparagine glycosylation is present at Asn-443. A run of 4 helical transmembrane segments spans residues 450 to 470 (IIAC…GFIP), 477 to 497 (FLGL…GLVM), 522 to 542 (ALYA…VGII), and 552 to 572 (AFVF…LVDV).

This sequence belongs to the ATG22 family.

The protein localises to the vacuole membrane. Vacuolar effluxer which mediate the efflux of amino acids resulting from autophagic degradation. The release of autophagic amino acids allows the maintenance of protein synthesis and viability during nitrogen starvation. The protein is Autophagy-related protein 22-1 (atg22-1) of Aspergillus fumigatus (strain ATCC MYA-4609 / CBS 101355 / FGSC A1100 / Af293) (Neosartorya fumigata).